Consider the following 500-residue polypeptide: tRNA nucleotidyltransferase cca1 (500 aa).

Residues 122–139 (DYTNSNSSNKLVFGTPLE) are flexible loop. Positions 231–241 (ERIGVEVDKML) match the ERhxxExxxhh motif motif.

This sequence belongs to the tRNA nucleotidyltransferase/poly(A) polymerase family.

The catalysed reaction is a tRNA precursor + 2 CTP = a tRNA with a 3' CC end + 2 diphosphate. In terms of biological role, tRNA nucleotidyltransferase involved in the synthesis of the tRNA CCA terminus. In contrast to what is usually observed in eukaryotes for which one enzyme synthesizes the whole tRNA CCA terminus, in S.pombe, cca1 specifically adds two cytidine residues to a tRNA substrate lacking this sequence while cca2 specifically adds the terminal adenosine residue thereby completing the CCA sequence. The protein is tRNA nucleotidyltransferase cca1 of Schizosaccharomyces pombe (strain 972 / ATCC 24843) (Fission yeast).